Here is a 48-residue protein sequence, read N- to C-terminus: MEVLILIIIFLLILTYTTFNFKINFVINNKEVTFSVREHTTSESSESS.

This is an uncharacterized protein from Acidianus convivator (ABV).